A 72-amino-acid polypeptide reads, in one-letter code: Translation initiation factor IF-1 (72 aa).

An S1-like domain is found at 1 to 72; it reads MAKEDNIEMQ…SKGRIVFRSR (72 aa).

It belongs to the IF-1 family. As to quaternary structure, component of the 30S ribosomal translation pre-initiation complex which assembles on the 30S ribosome in the order IF-2 and IF-3, IF-1 and N-formylmethionyl-tRNA(fMet); mRNA recruitment can occur at any time during PIC assembly.

The protein resides in the cytoplasm. In terms of biological role, one of the essential components for the initiation of protein synthesis. Stabilizes the binding of IF-2 and IF-3 on the 30S subunit to which N-formylmethionyl-tRNA(fMet) subsequently binds. Helps modulate mRNA selection, yielding the 30S pre-initiation complex (PIC). Upon addition of the 50S ribosomal subunit IF-1, IF-2 and IF-3 are released leaving the mature 70S translation initiation complex. This is Translation initiation factor IF-1 from Shewanella pealeana (strain ATCC 700345 / ANG-SQ1).